Reading from the N-terminus, the 372-residue chain is N-methyl-L-tryptophan oxidase (372 aa).

4–34 (DLIIIGSGSVGAAAGYYATRAGLNVLMTDAH) provides a ligand contact to FAD. Residue C308 is modified to S-8alpha-FAD cysteine.

Belongs to the MSOX/MTOX family. MTOX subfamily. As to quaternary structure, monomer. Requires FAD as cofactor.

It carries out the reaction N(alpha)-methyl-L-tryptophan + O2 + H2O = L-tryptophan + formaldehyde + H2O2. Functionally, catalyzes the oxidative demethylation of N-methyl-L-tryptophan. This is N-methyl-L-tryptophan oxidase from Escherichia coli O1:K1 / APEC.